Here is a 144-residue protein sequence, read N- to C-terminus: 3-dehydroquinate dehydratase (144 aa).

The Proton acceptor role is filled by tyrosine 24. Positions 76, 82, and 89 each coordinate substrate. The active-site Proton donor is histidine 102. Substrate is bound by residues leucine 103 to serine 104 and arginine 113.

It belongs to the type-II 3-dehydroquinase family. As to quaternary structure, homododecamer.

The catalysed reaction is 3-dehydroquinate = 3-dehydroshikimate + H2O. It functions in the pathway metabolic intermediate biosynthesis; chorismate biosynthesis; chorismate from D-erythrose 4-phosphate and phosphoenolpyruvate: step 3/7. Catalyzes a trans-dehydration via an enolate intermediate. The sequence is that of 3-dehydroquinate dehydratase from Nitrosomonas europaea (strain ATCC 19718 / CIP 103999 / KCTC 2705 / NBRC 14298).